We begin with the raw amino-acid sequence, 581 residues long: 2-isopropylmalate synthase (581 aa).

Positions 32-306 constitute a Pyruvate carboxyltransferase domain; the sequence is PQWCAVDLRD…DPQLDFSDIK (275 aa). Mg(2+)-binding residues include Asp-41, His-245, His-247, and Asn-281. Residues 455 to 581 form a regulatory domain region; it reads RSAPVEQIAL…KHQQLQNGGV (127 aa).

This sequence belongs to the alpha-IPM synthase/homocitrate synthase family. LeuA type 2 subfamily. In terms of assembly, homodimer. It depends on Mg(2+) as a cofactor.

Its subcellular location is the cytoplasm. It catalyses the reaction 3-methyl-2-oxobutanoate + acetyl-CoA + H2O = (2S)-2-isopropylmalate + CoA + H(+). The protein operates within amino-acid biosynthesis; L-leucine biosynthesis; L-leucine from 3-methyl-2-oxobutanoate: step 1/4. Its function is as follows. Catalyzes the condensation of the acetyl group of acetyl-CoA with 3-methyl-2-oxobutanoate (2-ketoisovalerate) to form 3-carboxy-3-hydroxy-4-methylpentanoate (2-isopropylmalate). This Corynebacterium efficiens (strain DSM 44549 / YS-314 / AJ 12310 / JCM 11189 / NBRC 100395) protein is 2-isopropylmalate synthase.